Reading from the N-terminus, the 159-residue chain is Cyclic pyranopterin monophosphate synthase (159 aa).

Substrate-binding positions include 75 to 77 (LCH) and 113 to 114 (ME). Aspartate 128 is a catalytic residue.

It belongs to the MoaC family. As to quaternary structure, homohexamer; trimer of dimers.

It catalyses the reaction (8S)-3',8-cyclo-7,8-dihydroguanosine 5'-triphosphate = cyclic pyranopterin phosphate + diphosphate. The protein operates within cofactor biosynthesis; molybdopterin biosynthesis. Its function is as follows. Catalyzes the conversion of (8S)-3',8-cyclo-7,8-dihydroguanosine 5'-triphosphate to cyclic pyranopterin monophosphate (cPMP). This Thiobacillus denitrificans (strain ATCC 25259 / T1) protein is Cyclic pyranopterin monophosphate synthase.